An 81-amino-acid chain; its full sequence is Small ribosomal subunit protein bS16 (81 aa).

Belongs to the bacterial ribosomal protein bS16 family.

This chain is Small ribosomal subunit protein bS16, found in Caldicellulosiruptor saccharolyticus (strain ATCC 43494 / DSM 8903 / Tp8T 6331).